The primary structure comprises 709 residues: MIYNYPMKYRRQFRRLPKHLQGIYYAFLSISTMIKIALDPYSKRPMKWMHSGTPFQYENERMVMIKLSLATVGLLFATRLSGLQFNKYTELKSVAERQQIGQVNDPQQRKIILDHHGDIVAIDLPAYDLYVHPRMCSISLERIAELLSPILDLSSQYLYNRLDEGDSGICLMHQIDTNTSAQIRRLGVDGIELVHHPQRVYPKRGSFESILGYVDTEGYGQAGLESSLDDWMKSTYQDVPCWMDGHGNFLGIRFPKQILFHQESALQLTIDCGLQEKVSQLITNAMNRFGAKRIAAIIMEAHSGAIRCLATSPSYDPNCYGWFPMERFRCWPITDLFEPGSTFKPVNLAIALENGIFQPTDRILDTGKIRIGDSWIGNVGGGFIWDRSLDHLTGTQILQRSSNVGMVRVMQSLDPAIYHRNLIRLGLGSHRNDNQTSFKMSSHDHNESGWNLKDLTSDYAISVVKDQDEFVDHEIEAATASFGQGLAMTPLKLLQLIATIANGGMAVTPHLISKIVTLDHFHHLQSMNEFSLQGWVGQSVLSRSQYHAKQPRPYTHDLYLGHVPVPSLELGWFDVKSIPPHTRERRRLFSRQTCNVLLGMLEQVVLDAQATGSRGFLPGYAMAGKTGTAQKASALGGYSTDSVVTSFVGIYPAVKPKFVTLVIIDEPEDPFRFGFNTAVDVTQTLISEMIVQEQDPPSYPTVSLFERNM.

A helical membrane pass occupies residues 20–42 (LQGIYYAFLSISTMIKIALDPYS). Ser-341 acts as the Acyl-ester intermediate in catalysis.

It belongs to the transpeptidase family.

The protein resides in the plastid. The protein localises to the chloroplast membrane. The enzyme catalyses Preferential cleavage: (Ac)2-L-Lys-D-Ala-|-D-Ala. Also transpeptidation of peptidyl-alanyl moieties that are N-acyl substituents of D-alanine.. The chain is Peptidoglycan D,D-transpeptidase FtsI homolog (ftsI) from Nephroselmis olivacea (Green alga).